The chain runs to 77 residues: MFLRLIDDNGIVLNSILWLLVMIFFFVLAMTFIKLIQLCFTCHYFFSRTLYQPVYKIFLAYQDYMQIAPVPAEVLNV.

Residues 1 to 15 lie on the Virion surface side of the membrane; that stretch reads MFLRLIDDNGIVLNS. Residues 16 to 36 form a helical membrane-spanning segment; that stretch reads ILWLLVMIFFFVLAMTFIKLI. The Intravirion portion of the chain corresponds to 37–77; the sequence is QLCFTCHYFFSRTLYQPVYKIFLAYQDYMQIAPVPAEVLNV.

Belongs to the alphacoronaviruses E protein family. As to quaternary structure, homopentamer. Interacts with membrane protein M in the budding compartment of the host cell, which is located between endoplasmic reticulum and the Golgi complex. Interacts with Nucleoprotein.

Its subcellular location is the host Golgi apparatus membrane. Plays a central role in virus morphogenesis and assembly. Acts as a viroporin and self-assembles in host membranes forming pentameric protein-lipid pores that allow ion transport. Also plays a role in the induction of apoptosis. This is Envelope small membrane protein from Homo sapiens (Human).